The primary structure comprises 570 residues: Sulfite reductase [NADPH] hemoprotein beta-component (570 aa).

[4Fe-4S] cluster-binding residues include cysteine 434, cysteine 440, cysteine 479, and cysteine 483. Cysteine 483 serves as a coordination point for siroheme.

Belongs to the nitrite and sulfite reductase 4Fe-4S domain family. In terms of assembly, alpha(8)-beta(8). The alpha component is a flavoprotein, the beta component is a hemoprotein. Siroheme is required as a cofactor. The cofactor is [4Fe-4S] cluster.

The catalysed reaction is hydrogen sulfide + 3 NADP(+) + 3 H2O = sulfite + 3 NADPH + 4 H(+). It functions in the pathway sulfur metabolism; hydrogen sulfide biosynthesis; hydrogen sulfide from sulfite (NADPH route): step 1/1. In terms of biological role, component of the sulfite reductase complex that catalyzes the 6-electron reduction of sulfite to sulfide. This is one of several activities required for the biosynthesis of L-cysteine from sulfate. This is Sulfite reductase [NADPH] hemoprotein beta-component from Salmonella heidelberg (strain SL476).